The following is a 160-amino-acid chain: 6,7-dimethyl-8-ribityllumazine synthase (160 aa).

5-amino-6-(D-ribitylamino)uracil-binding positions include F22, 57–59, and 81–83; these read AVE and AVI. 86–87 is a (2S)-2-hydroxy-3-oxobutyl phosphate binding site; it reads GT. The active-site Proton donor is H89. F114 serves as a coordination point for 5-amino-6-(D-ribitylamino)uracil. R128 contributes to the (2S)-2-hydroxy-3-oxobutyl phosphate binding site.

The protein belongs to the DMRL synthase family. In terms of assembly, forms an icosahedral capsid composed of 60 subunits, arranged as a dodecamer of pentamers.

The catalysed reaction is (2S)-2-hydroxy-3-oxobutyl phosphate + 5-amino-6-(D-ribitylamino)uracil = 6,7-dimethyl-8-(1-D-ribityl)lumazine + phosphate + 2 H2O + H(+). Its pathway is cofactor biosynthesis; riboflavin biosynthesis; riboflavin from 2-hydroxy-3-oxobutyl phosphate and 5-amino-6-(D-ribitylamino)uracil: step 1/2. Its function is as follows. Catalyzes the formation of 6,7-dimethyl-8-ribityllumazine by condensation of 5-amino-6-(D-ribitylamino)uracil with 3,4-dihydroxy-2-butanone 4-phosphate. This is the penultimate step in the biosynthesis of riboflavin. This Shewanella sediminis (strain HAW-EB3) protein is 6,7-dimethyl-8-ribityllumazine synthase.